We begin with the raw amino-acid sequence, 494 residues long: UPF0371 protein SPG_0310 (494 aa).

Belongs to the UPF0371 family.

The chain is UPF0371 protein SPG_0310 from Streptococcus pneumoniae serotype 19F (strain G54).